We begin with the raw amino-acid sequence, 280 residues long: Probable endonuclease 4 (280 aa).

Zn(2+)-binding residues include H69, H109, E145, D179, H182, H216, D229, H231, and E261.

It belongs to the AP endonuclease 2 family. Requires Zn(2+) as cofactor.

The catalysed reaction is Endonucleolytic cleavage to 5'-phosphooligonucleotide end-products.. In terms of biological role, endonuclease IV plays a role in DNA repair. It cleaves phosphodiester bonds at apurinic or apyrimidinic (AP) sites, generating a 3'-hydroxyl group and a 5'-terminal sugar phosphate. This Actinobacillus pleuropneumoniae serotype 7 (strain AP76) protein is Probable endonuclease 4.